The sequence spans 263 residues: Small ribosomal subunit protein eS4 (263 aa).

An S4 RNA-binding domain is found at 42-104; the sequence is LPLIVFLRNR…TGEHFRLVYD (63 aa).

It belongs to the eukaryotic ribosomal protein eS4 family.

The chain is Small ribosomal subunit protein eS4 (RPS4Y1) from Gorilla gorilla gorilla (Western lowland gorilla).